Here is a 235-residue protein sequence, read N- to C-terminus: Uridylate kinase (235 aa).

10–13 (KLSG) is an ATP binding site. Gly52 is a binding site for UMP. Gly53 and Arg57 together coordinate ATP. Residues Asp72 and 133-140 (TSNPYFST) each bind UMP. Thr160, Tyr166, and Asp169 together coordinate ATP.

This sequence belongs to the UMP kinase family. In terms of assembly, homohexamer.

The protein resides in the cytoplasm. The catalysed reaction is UMP + ATP = UDP + ADP. Its pathway is pyrimidine metabolism; CTP biosynthesis via de novo pathway; UDP from UMP (UMPK route): step 1/1. With respect to regulation, inhibited by UTP. Functionally, catalyzes the reversible phosphorylation of UMP to UDP. The chain is Uridylate kinase from Solibacter usitatus (strain Ellin6076).